The sequence spans 152 residues: Protein SprT-like (152 aa).

The region spanning 7-148 (QRLVEEVSLQ…GKCKGKLILI (142 aa)) is the SprT-like domain. Residue histidine 67 participates in Zn(2+) binding. The active site involves glutamate 68. Histidine 71 contacts Zn(2+).

It belongs to the SprT family. Zn(2+) serves as cofactor.

The protein localises to the cytoplasm. The protein is Protein SprT-like of Bacillus thuringiensis subsp. konkukian (strain 97-27).